Consider the following 318-residue polypeptide: Sucrose operon repressor (318 aa).

The 56-residue stretch at 1–56 (MIKLEDVANKAGVSVTTVSRVINRKGYLSDATISKVEKAMQDLHYIPNAAARSLQG) folds into the HTH lacI-type domain. The segment at residues 4-23 (LEDVANKAGVSVTTVSRVIN) is a DNA-binding region (H-T-H motif).

Its function is as follows. This protein may control the expression of the genes that are involved in the transport and catabolism of sucrose. The sequence is that of Sucrose operon repressor (sacR) from Lactococcus lactis subsp. lactis (Streptococcus lactis).